The sequence spans 396 residues: Tryptophan synthase beta chain (396 aa).

At Lys88 the chain carries N6-(pyridoxal phosphate)lysine.

It belongs to the TrpB family. As to quaternary structure, tetramer of two alpha and two beta chains. Requires pyridoxal 5'-phosphate as cofactor.

The enzyme catalyses (1S,2R)-1-C-(indol-3-yl)glycerol 3-phosphate + L-serine = D-glyceraldehyde 3-phosphate + L-tryptophan + H2O. It functions in the pathway amino-acid biosynthesis; L-tryptophan biosynthesis; L-tryptophan from chorismate: step 5/5. In terms of biological role, the beta subunit is responsible for the synthesis of L-tryptophan from indole and L-serine. The protein is Tryptophan synthase beta chain of Actinobacillus pleuropneumoniae serotype 3 (strain JL03).